Here is a 393-residue protein sequence, read N- to C-terminus: Rubredoxin-NAD(+) reductase (393 aa).

Residues 9–12 (SGMA), 33–34 (CA), Lys-42, Val-80, Glu-162, Asp-282, Val-294, and Lys-325 contribute to the FAD site.

Belongs to the FAD-dependent oxidoreductase family. Homodimer. FAD is required as a cofactor.

The protein resides in the cytoplasm. The enzyme catalyses 2 reduced [rubredoxin] + NAD(+) + H(+) = 2 oxidized [rubredoxin] + NADH. Its pathway is hydrocarbon metabolism; alkane degradation. Involved in the hydrocarbon hydroxylating system, which transfers electrons from NADH to rubredoxin reductase and then through rubredoxin to alkane 1 monooxygenase. In Acinetobacter baylyi (strain ATCC 33305 / BD413 / ADP1), this protein is Rubredoxin-NAD(+) reductase (rubB).